A 265-amino-acid polypeptide reads, in one-letter code: Phosphate import ATP-binding protein PstB 2 (265 aa).

Residues 13–260 (FRTENLNVYY…PTKQATRDYV (248 aa)) enclose the ABC transporter domain. 45–52 (GPSGCGKS) lines the ATP pocket.

Belongs to the ABC transporter superfamily. Phosphate importer (TC 3.A.1.7) family. As to quaternary structure, the complex is composed of two ATP-binding proteins (PstB), two transmembrane proteins (PstC and PstA) and a solute-binding protein (PstS).

The protein localises to the cell inner membrane. The catalysed reaction is phosphate(out) + ATP + H2O = ADP + 2 phosphate(in) + H(+). Part of the ABC transporter complex PstSACB involved in phosphate import. Responsible for energy coupling to the transport system. The sequence is that of Phosphate import ATP-binding protein PstB 2 from Synechococcus sp. (strain JA-3-3Ab) (Cyanobacteria bacterium Yellowstone A-Prime).